A 304-amino-acid chain; its full sequence is Non-structural maintenance of chromosomes element 3 homolog (304 aa).

Disordered stretches follow at residues 1 to 82 and 285 to 304; these read MLQK…PRSQ and ALAD…APSS. The span at 32-43 shows a compositional bias: basic and acidic residues; that stretch reads AGEDARVLRDGF. A phosphoserine mark is found at serine 57, serine 60, and serine 64. Over residues 60–80 the composition is skewed to low complexity; sequence SQGPSPQGARRAQAAPAVGPR. The segment at 78–304 is interaction with NSMCE1; sequence GPRSQKQLEL…PQPSGPAPSS (227 aa). One can recognise an MAGE domain in the interval 85–285; the sequence is LELKVSELVQ…KDWPAQYCEA (201 aa).

As to quaternary structure, component of the SMC5-SMC6 complex which consists at least of SMC5, SMC6, NSMCE2, NSMCE1, NSMCE4A or EID3 and NSMCE3. NSMCE1, NSMCE4A or EID3 and NSMCE3 probably form a subcomplex that bridges the head domains of the SMC5:SMC6 heterodimer. Interacts with PJA1. Interacts with E2F1 (via C-terminus). Interacts with NGFR (via C-terminus). Interacts with NSMCE1. Interacts with NSMCE4. Interacts with SMC6. Interacts with EID3. In terms of tissue distribution, ubiquitous.

The protein resides in the cytoplasm. The protein localises to the nucleus. It localises to the chromosome. It is found in the telomere. Its function is as follows. Component of the SMC5-SMC6 complex, a complex involved in repair of DNA double-strand breaks by homologous recombination. The complex may promote sister chromatid homologous recombination by recruiting the SMC1-SMC3 cohesin complex to double-strand breaks. The complex is required for telomere maintenance via recombination in ALT (alternative lengthening of telomeres) cell lines and mediates sumoylation of shelterin complex (telosome) components which is proposed to lead to shelterin complex disassembly in ALT-associated PML bodies (APBs). In vitro enhances ubiquitin ligase activity of NSMCE1. Proposed to act through recruitment and/or stabilization of the Ubl-conjugating enzyme (E2) at the E3:substrate complex. May be a growth suppressor that facilitates the entry of the cell into cell cycle arrest. In Homo sapiens (Human), this protein is Non-structural maintenance of chromosomes element 3 homolog.